The following is a 95-amino-acid chain: uncharacterized protein (95 aa).

Residues 3–23 traverse the membrane as a helical segment; sequence FVIIIAILLLGISLILAFTVL.

It localises to the membrane. This is an uncharacterized protein from Methanocaldococcus jannaschii (strain ATCC 43067 / DSM 2661 / JAL-1 / JCM 10045 / NBRC 100440) (Methanococcus jannaschii).